A 363-amino-acid chain; its full sequence is Peptide chain release factor 1 (363 aa).

Gln-237 carries the N5-methylglutamine modification. Residues 284-296 (EDEKRRSAEESTR) are compositionally biased toward basic and acidic residues. The interval 284-305 (EDEKRRSAEESTRRSLVASGDR) is disordered.

Belongs to the prokaryotic/mitochondrial release factor family. Post-translationally, methylated by PrmC. Methylation increases the termination efficiency of RF1.

The protein resides in the cytoplasm. Functionally, peptide chain release factor 1 directs the termination of translation in response to the peptide chain termination codons UAG and UAA. The polypeptide is Peptide chain release factor 1 (Shewanella baltica (strain OS195)).